The primary structure comprises 277 residues: Inositol monophosphatase 1 (277 aa).

4 residues coordinate Mg(2+): glutamate 70, aspartate 90, isoleucine 92, and aspartate 93. Glutamate 70 contributes to the substrate binding site. 92 to 95 is a binding site for substrate; sequence IDGT. Threonine 168 carries the post-translational modification Phosphothreonine. Residues 194–196, glutamate 213, and aspartate 220 each bind substrate; that span reads GTA. Aspartate 220 contacts Mg(2+).

Belongs to the inositol monophosphatase superfamily. Homodimer. Mg(2+) is required as a cofactor.

The protein resides in the cytoplasm. It catalyses the reaction a myo-inositol phosphate + H2O = myo-inositol + phosphate. It carries out the reaction 1D-myo-inositol 1-phosphate + H2O = myo-inositol + phosphate. The enzyme catalyses 1D-myo-inositol 2-phosphate + H2O = myo-inositol + phosphate. The catalysed reaction is 1D-myo-inositol 3-phosphate + H2O = myo-inositol + phosphate. It catalyses the reaction 1D-myo-inositol 4-phosphate + H2O = myo-inositol + phosphate. It carries out the reaction 1D-myo-inositol 5-phosphate + H2O = myo-inositol + phosphate. The enzyme catalyses 1D-myo-inositol 6-phosphate + H2O = myo-inositol + phosphate. The catalysed reaction is scyllo-inositol 1-phosphate + H2O = scyllo-inositol + phosphate. It catalyses the reaction alpha-D-galactose 1-phosphate + H2O = D-galactose + phosphate. It carries out the reaction alpha-D-glucose 1-phosphate + H2O = D-glucose + phosphate. The enzyme catalyses D-glucose 6-phosphate + H2O = D-glucose + phosphate. The catalysed reaction is beta-D-fructose 1-phosphate + H2O = D-fructose + phosphate. It catalyses the reaction glycerol 2-phosphate + H2O = glycerol + phosphate. It carries out the reaction adenosine 2'-phosphate + H2O = adenosine + phosphate. The protein operates within polyol metabolism; myo-inositol biosynthesis; myo-inositol from D-glucose 6-phosphate: step 2/2. With respect to regulation, inhibited by Li(+), Ca(2+) and Mn(2+), but also by Mg(2+) at concentrations above 3 mM. Functionally, phosphatase involved in the dephosphorylation of myo-inositol monophosphate to generate myo-inositol. Is also able to dephosphorylate scyllo-inositol-phosphate, myo-inositol 1,4-diphosphate, scyllo-inositol-1,3-diphosphate and scyllo-inositol-1,4-diphosphate. Also dephosphorylates in vitro other sugar-phosphates including D-galactose-1-phosphate, glucose-1-phosphate, glucose-6-phosphate, fructose-1-phosphate, beta-glycerophosphate and 2'-AMP. Responsible for the provision of inositol required for synthesis of phosphatidylinositol and polyphosphoinositides, and involved in maintaining normal brain function. Has been implicated as the pharmacological target for lithium Li(+) action in brain. This Sus scrofa (Pig) protein is Inositol monophosphatase 1 (IMPA1).